The chain runs to 469 residues: 3-isopropylmalate dehydratase large subunit (469 aa).

[4Fe-4S] cluster-binding residues include Cys-347, Cys-408, and Cys-411.

It belongs to the aconitase/IPM isomerase family. LeuC type 1 subfamily. In terms of assembly, heterodimer of LeuC and LeuD. The cofactor is [4Fe-4S] cluster.

The enzyme catalyses (2R,3S)-3-isopropylmalate = (2S)-2-isopropylmalate. It participates in amino-acid biosynthesis; L-leucine biosynthesis; L-leucine from 3-methyl-2-oxobutanoate: step 2/4. In terms of biological role, catalyzes the isomerization between 2-isopropylmalate and 3-isopropylmalate, via the formation of 2-isopropylmaleate. This chain is 3-isopropylmalate dehydratase large subunit, found in Actinobacillus pleuropneumoniae serotype 5b (strain L20).